Here is a 302-residue protein sequence, read N- to C-terminus: Aspartate carbamoyltransferase catalytic subunit (302 aa).

Carbamoyl phosphate is bound by residues Arg-55 and Thr-56. Residue Lys-83 coordinates L-aspartate. Positions 105, 133, and 136 each coordinate carbamoyl phosphate. 2 residues coordinate L-aspartate: Arg-166 and Arg-222. Carbamoyl phosphate is bound by residues Gly-262 and Pro-263.

It belongs to the aspartate/ornithine carbamoyltransferase superfamily. ATCase family. Heterododecamer (2C3:3R2) of six catalytic PyrB chains organized as two trimers (C3), and six regulatory PyrI chains organized as three dimers (R2).

The catalysed reaction is carbamoyl phosphate + L-aspartate = N-carbamoyl-L-aspartate + phosphate + H(+). Its pathway is pyrimidine metabolism; UMP biosynthesis via de novo pathway; (S)-dihydroorotate from bicarbonate: step 2/3. In terms of biological role, catalyzes the condensation of carbamoyl phosphate and aspartate to form carbamoyl aspartate and inorganic phosphate, the committed step in the de novo pyrimidine nucleotide biosynthesis pathway. This Solibacter usitatus (strain Ellin6076) protein is Aspartate carbamoyltransferase catalytic subunit.